A 45-amino-acid polypeptide reads, in one-letter code: MAPPTREYRCTPNYHSARHQMSSLLGLCKGGVGPQPRPWCEKTMV.

This is an uncharacterized protein from Lolium latent virus (isolate Lolium/USA/US1/-) (LoLV).